The following is a 400-amino-acid chain: Arabinan endo-1,5-alpha-L-arabinosidase B (400 aa).

The signal sequence occupies residues 1–16; that stretch reads MAVIFVLFFLVSMALS. Asn24 is a glycosylation site (N-linked (GlcNAc...) asparagine). Residue Asp70 is the Proton acceptor of the active site. Asn184 carries N-linked (GlcNAc...) asparagine glycosylation. Glu277 (proton donor) is an active-site residue. A glycan (N-linked (GlcNAc...) asparagine) is linked at Asn372.

Belongs to the glycosyl hydrolase 43 family.

The protein resides in the secreted. The enzyme catalyses Endohydrolysis of (1-&gt;5)-alpha-arabinofuranosidic linkages in (1-&gt;5)-arabinans.. The protein operates within glycan metabolism; L-arabinan degradation. Its function is as follows. Endo-1,5-alpha-L-arabinanase involved in degradation of pectin. Its preferred substrate is linear 1,5-alpha-L-arabinan. The chain is Arabinan endo-1,5-alpha-L-arabinosidase B (abnB) from Emericella nidulans (strain FGSC A4 / ATCC 38163 / CBS 112.46 / NRRL 194 / M139) (Aspergillus nidulans).